A 307-amino-acid polypeptide reads, in one-letter code: tRNA dimethylallyltransferase (307 aa).

Residue 9–16 (GATGTGKS) participates in ATP binding. Position 11–16 (11–16 (TGTGKS)) interacts with substrate.

Belongs to the IPP transferase family. Monomer. It depends on Mg(2+) as a cofactor.

It catalyses the reaction adenosine(37) in tRNA + dimethylallyl diphosphate = N(6)-dimethylallyladenosine(37) in tRNA + diphosphate. Functionally, catalyzes the transfer of a dimethylallyl group onto the adenine at position 37 in tRNAs that read codons beginning with uridine, leading to the formation of N6-(dimethylallyl)adenosine (i(6)A). The chain is tRNA dimethylallyltransferase from Clavibacter sepedonicus (Clavibacter michiganensis subsp. sepedonicus).